A 343-amino-acid chain; its full sequence is S-adenosylmethionine:tRNA ribosyltransferase-isomerase (343 aa).

This sequence belongs to the QueA family. As to quaternary structure, monomer.

Its subcellular location is the cytoplasm. The enzyme catalyses 7-aminomethyl-7-carbaguanosine(34) in tRNA + S-adenosyl-L-methionine = epoxyqueuosine(34) in tRNA + adenine + L-methionine + 2 H(+). The protein operates within tRNA modification; tRNA-queuosine biosynthesis. Functionally, transfers and isomerizes the ribose moiety from AdoMet to the 7-aminomethyl group of 7-deazaguanine (preQ1-tRNA) to give epoxyqueuosine (oQ-tRNA). In Pelobacter propionicus (strain DSM 2379 / NBRC 103807 / OttBd1), this protein is S-adenosylmethionine:tRNA ribosyltransferase-isomerase.